Here is a 176-residue protein sequence, read N- to C-terminus: Small ribosomal subunit protein uS5 (176 aa).

Residues phenylalanine 15 to valine 78 enclose the S5 DRBM domain.

It belongs to the universal ribosomal protein uS5 family. As to quaternary structure, part of the 30S ribosomal subunit. Contacts proteins S4 and S8.

Functionally, with S4 and S12 plays an important role in translational accuracy. In terms of biological role, located at the back of the 30S subunit body where it stabilizes the conformation of the head with respect to the body. This chain is Small ribosomal subunit protein uS5, found in Thermosipho africanus (strain TCF52B).